The following is a 727-amino-acid chain: Sodium-dependent neutral amino acid transporter SLC6A17 (727 aa).

Over 1-68 the chain is Cytoplasmic; it reads MPKNSKVTQR…DRPAWNSKLQ (68 aa). S13 and S20 each carry phosphoserine. The chain crosses the membrane as a helical span at residues 69–89; the sequence is YILAQIGFSVGLGNIWRFPYL. Residues 90–96 are Extracellular-facing; sequence CQKNGGG. A helical transmembrane segment spans residues 97-116; it reads AYLVPYLVLLIIIGIPLFFL. Residues 117 to 140 lie on the Cytoplasmic side of the membrane; it reads ELAVGQRIRRGSIGVWHYVCPRLG. Residues 141-161 traverse the membrane as a helical segment; that stretch reads GIGFSSCIVCLFVGLYYNVII. The Extracellular segment spans residues 162 to 224; that stretch reads GWSVFYFFKS…NSISESGGLN (63 aa). A glycan (N-linked (GlcNAc...) asparagine) is linked at N186. A helical membrane pass occupies residues 225–243; the sequence is WKMTLCLLVAWSIVGMAVV. The Cytoplasmic portion of the chain corresponds to 244 to 251; sequence KGIQSSGK. Residues 252–269 traverse the membrane as a helical segment; sequence VMYFSSLFPYVVLACFLV. At 270–304 the chain is on the extracellular side; it reads RGLLLRGAVDGILHMFTPKLDKMLDPQVWREAATQ. Residues 305–322 traverse the membrane as a helical segment; sequence VFFALGLGFGGVIAFSSY. The Cytoplasmic segment spans residues 323 to 333; it reads NKQDNNCHFDA. A helical transmembrane segment spans residues 334–355; sequence ALVSFINFFTSVLATLVVFAVL. The Extracellular portion of the chain corresponds to 356–451; it reads GFKANIMNEK…FIAFTEAMTH (96 aa). Y377 carries the post-translational modification Phosphotyrosine. The N-linked (GlcNAc...) asparagine glycan is linked to N393. Residues 452 to 471 traverse the membrane as a helical segment; sequence FPASPFWSVMFFLMLINLGL. The Cytoplasmic portion of the chain corresponds to 472–494; the sequence is GSMIGTMAGITTPIIDTFKVPKE. A helical membrane pass occupies residues 495–513; it reads MFTVGCCVFAFFVGLLFVQ. At 514 to 528 the chain is on the extracellular side; that stretch reads RSGNYFVTMFDDYSA. A helical transmembrane segment spans residues 529 to 549; sequence TLPLTVIVILENIAVAWIYGT. The Cytoplasmic segment spans residues 550 to 569; that stretch reads KKFMQELTEMLGFQPYRFYF. Residues 570 to 591 form a helical membrane-spanning segment; sequence YMWKFVSPLCMAVLTTASIIQL. Topologically, residues 592 to 618 are extracellular; sequence GVSPPGYSAWIKEEAAERYLYFPNWAM. The helical transmembrane segment at 619–641 threads the bilayer; the sequence is ALLITLIAVATLPIPVVFILRHF. Over 642-727 the chain is Cytoplasmic; that stretch reads HLLSDGSNTL…LLASTPESEL (86 aa). Residues S665 and S701 each carry the phosphoserine modification. Residues 680–727 form a disordered region; it reads VPSEAPSPMPTHRSYLGPGSTSPLDNSNNPNGRYGSGYLLASTPESEL. The segment covering 698–710 has biased composition (polar residues); sequence GSTSPLDNSNNPN.

This sequence belongs to the sodium:neurotransmitter symporter (SNF) (TC 2.A.22) family. Expressed in the brain. The strongest expression levels in embryonic, postnatal, and adult stages are found in both cortical and hippocampal tissues.

Its subcellular location is the cytoplasmic vesicle. The protein localises to the secretory vesicle. The protein resides in the synaptic vesicle membrane. It is found in the postsynapse. It localises to the presynapse. The enzyme catalyses L-proline(in) + Na(+)(in) = L-proline(out) + Na(+)(out). It carries out the reaction L-leucine(in) + Na(+)(in) = L-leucine(out) + Na(+)(out). The catalysed reaction is glycine(in) + Na(+)(in) = glycine(out) + Na(+)(out). It catalyses the reaction L-alanine(in) + Na(+)(in) = L-alanine(out) + Na(+)(out). The enzyme catalyses L-glutamine(in) + Na(+)(in) = L-glutamine(out) + Na(+)(out). In terms of biological role, synaptic vesicle transporter with apparent selectivity for neutral amino acids. The transport is sodium-coupled but chloride-independent, likely driven by the proton electrochemical gradient generated by vacuolar H(+)-ATPase in an overall electrogenic mechanism. May contribute to the synaptic uptake of neurotransmitter precursors in a process coupled in part to vesicle exocytosis. In Mus musculus (Mouse), this protein is Sodium-dependent neutral amino acid transporter SLC6A17.